The primary structure comprises 164 residues: UPF0225 protein Shewmr4_2054 (164 aa).

The protein belongs to the UPF0225 family.

The chain is UPF0225 protein Shewmr4_2054 from Shewanella sp. (strain MR-4).